Here is a 470-residue protein sequence, read N- to C-terminus: Poly(A) polymerase catalytic subunit (470 aa).

Residues Asp192 and Asp194 contribute to the active site.

Belongs to the poxviridae poly(A) polymerase catalytic subunit family. As to quaternary structure, heterodimer of a large (catalytic) subunit and a small (regulatory) subunit.

The catalysed reaction is RNA(n) + ATP = RNA(n)-3'-adenine ribonucleotide + diphosphate. Its function is as follows. Polymerase that creates the 3'-poly(A) tail of mRNA's. The sequence is that of Poly(A) polymerase catalytic subunit (PAPL) from Myxoma virus (strain Lausanne) (MYXV).